The following is a 691-amino-acid chain: Elongation factor G (691 aa).

The 275-residue stretch at 8-282 (ERVRNIGIAA…AVVDYLPAPI (275 aa)) folds into the tr-type G domain. Residues 17–24 (AHIDAGKT), 81–85 (DTPGH), and 135–138 (NKMD) contribute to the GTP site.

Belongs to the TRAFAC class translation factor GTPase superfamily. Classic translation factor GTPase family. EF-G/EF-2 subfamily.

It is found in the cytoplasm. Catalyzes the GTP-dependent ribosomal translocation step during translation elongation. During this step, the ribosome changes from the pre-translocational (PRE) to the post-translocational (POST) state as the newly formed A-site-bound peptidyl-tRNA and P-site-bound deacylated tRNA move to the P and E sites, respectively. Catalyzes the coordinated movement of the two tRNA molecules, the mRNA and conformational changes in the ribosome. This Synechococcus sp. (strain CC9311) protein is Elongation factor G.